Here is a 161-residue protein sequence, read N- to C-terminus: Ubiquitin D (161 aa).

Ubiquitin-like domains are found at residues 3-77 and 86-159; these read SCVC…LKVV and LSLV…AHCI.

The protein belongs to the ubiquitin D family. As to quaternary structure, interacts directly with the 26S proteasome. Interacts with NUB1; this interaction facilitates the linking of UBD-conjugated target protein to the proteasome complex and accelerates its own degradation and that of its conjugates. Interacts (via ubiquitin-like 1 domain) with the spindle checkpoint protein MAD2L1 during mitosis. Present in aggresomes of proteasome inhibited cells. Interacts with HDAC6 under proteasome impairment conditions. Forms a thioester with UBA6 in cells stimulated with tumor necrosis factor-alpha (TNFa) and interferon-gamma (IFNg). Interacts with SQSTM1 and TP53/p53. Post-translationally, can be acetylated.

Its subcellular location is the nucleus. The protein localises to the cytoplasm. Functionally, ubiquitin-like protein modifier which can be covalently attached to target proteins and subsequently leads to their degradation by the 26S proteasome, in a NUB1-dependent manner. Conjugation to the target protein is activated by UBA6 via adenylation of its C-terminal glycine. Probably functions as a survival factor. Promotes the expression of the proteasome subunit beta type-9 (PSMB9/LMP2). Regulates TNF-alpha-induced and LPS-mediated activation of the central mediator of innate immunity NF-kappa-B by promoting TNF-alpha-mediated proteasomal degradation of ubiquitinated-I-kappa-B-alpha. Required for TNF-alpha-induced p65 nuclear translocation in renal tubular epithelial cells (RTECs). May be involved in dendritic cell (DC) maturation, the process by which immature dendritic cells differentiate into fully competent antigen-presenting cells that initiate T-cell responses. Mediates mitotic non-disjunction and chromosome instability, in long-term in vitro culture and cancers, by abbreviating mitotic phase and impairing the kinetochore localization of MAD2L1 during the prometaphase stage of the cell cycle. May be involved in the formation of aggresomes when proteasome is saturated or impaired. Mediates apoptosis in a caspase-dependent manner, especially in renal epithelium and tubular cells during renal diseases. This Rattus norvegicus (Rat) protein is Ubiquitin D (Ubd).